The following is a 122-amino-acid chain: Ribosome-binding factor A (122 aa).

Belongs to the RbfA family. Monomer. Binds 30S ribosomal subunits, but not 50S ribosomal subunits or 70S ribosomes.

It localises to the cytoplasm. Functionally, one of several proteins that assist in the late maturation steps of the functional core of the 30S ribosomal subunit. Associates with free 30S ribosomal subunits (but not with 30S subunits that are part of 70S ribosomes or polysomes). Required for efficient processing of 16S rRNA. May interact with the 5'-terminal helix region of 16S rRNA. The polypeptide is Ribosome-binding factor A (Cupriavidus necator (strain ATCC 17699 / DSM 428 / KCTC 22496 / NCIMB 10442 / H16 / Stanier 337) (Ralstonia eutropha)).